The sequence spans 231 residues: Cytidylate kinase (231 aa).

Residue 16 to 24 (GPAASGKST) participates in ATP binding. The disordered stretch occupies residues 176-205 (PDLDSLEQEITKRDRDDAEREHAPLKKHPE). Residues 184-205 (EITKRDRDDAEREHAPLKKHPE) show a composition bias toward basic and acidic residues.

Belongs to the cytidylate kinase family. Type 1 subfamily.

The protein localises to the cytoplasm. It carries out the reaction CMP + ATP = CDP + ADP. The enzyme catalyses dCMP + ATP = dCDP + ADP. This Pelodictyon phaeoclathratiforme (strain DSM 5477 / BU-1) protein is Cytidylate kinase.